A 467-amino-acid polypeptide reads, in one-letter code: MATGKIVQIIGAVVDVEFPQSNVPSVYDALNVTDSKERLVLEVQQQLGGGVVRCIVMGSSDGLRRGVEVVNTGAPISVPVGTKTLGRIMNVLGDAIDERGEVGAEEVYSIHRSAPSYEEQSNEIALLETGVKVIDLICPFAKGGKIGLFGGAGVGKTVNMMELINNIALQHSGLSVFAGVGERTREGNDFYYEMQEAGVVNVEKPEESKVAMVYGQMNEPPGNRLRVALTGLTMAERFRDEGRDVLLFIDNIYRYTLAGTEVSALLGRMPSAVGYQPTLAEEMGVLQERITSTKSGSITSVQAVYVPADDLTDPSPATTFAHLDATVVLNRNIAAMGLYPAIDPLDSTSRMLDPLVVGQDHYEVARGVQQTLQRYKELKDIIAILGMDELSEEDKQVVSRARKIERFLTQPYHVAEVFTGDPGIYVPLKETLRGFKGLLAGEYDDIPEQAFMYCGSIDDAIENAKKL.

Position 150–157 (150–157 (GGAGVGKT)) interacts with ATP.

It belongs to the ATPase alpha/beta chains family. In terms of assembly, F-type ATPases have 2 components, CF(1) - the catalytic core - and CF(0) - the membrane proton channel. CF(1) has five subunits: alpha(3), beta(3), gamma(1), delta(1), epsilon(1). CF(0) has three main subunits: a(1), b(2) and c(9-12). The alpha and beta chains form an alternating ring which encloses part of the gamma chain. CF(1) is attached to CF(0) by a central stalk formed by the gamma and epsilon chains, while a peripheral stalk is formed by the delta and b chains.

The protein resides in the cell inner membrane. It catalyses the reaction ATP + H2O + 4 H(+)(in) = ADP + phosphate + 5 H(+)(out). In terms of biological role, produces ATP from ADP in the presence of a proton gradient across the membrane. The catalytic sites are hosted primarily by the beta subunits. The chain is ATP synthase subunit beta from Vibrio alginolyticus.